Consider the following 273-residue polypeptide: Protein FAM210A (273 aa).

The span at 97 to 106 (SSSATSSGPP) shows a compositional bias: low complexity. Residues 97 to 116 (SSSATSSGPPSEKKEDPDPL) form a disordered region. Basic and acidic residues predominate over residues 107-116 (SEKKEDPDPL). One can recognise a DUF1279 domain in the interval 118 to 230 (DRSISLYQRF…GYMSTPPPVK (113 aa)). Residues 137 to 157 (VLIPVHLITSAVWFGTFYYAA) traverse the membrane as a helical segment. A coiled-coil region spans residues 230 to 269 (KEYLQDKMEETKELLTEKMEETKDRLTEKLQETKGKVSLK). The interval 247 to 273 (KMEETKDRLTEKLQETKGKVSLKKKVE) is disordered.

It belongs to the FAM210 family. Interacts with ATAD3A.

It localises to the membrane. It is found in the mitochondrion. The protein resides in the cytoplasm. Functionally, may play a role in the structure and strength of both muscle and bone. This chain is Protein FAM210A (FAM210A), found in Bos taurus (Bovine).